A 130-amino-acid polypeptide reads, in one-letter code: Phosphoribosyl-AMP cyclohydrolase (130 aa).

Aspartate 77 is a binding site for Mg(2+). Zn(2+) is bound at residue cysteine 78. Residues aspartate 79 and aspartate 81 each coordinate Mg(2+). Zn(2+) contacts are provided by cysteine 95 and cysteine 102.

It belongs to the PRA-CH family. As to quaternary structure, homodimer. It depends on Mg(2+) as a cofactor. Zn(2+) is required as a cofactor.

The protein resides in the cytoplasm. The catalysed reaction is 1-(5-phospho-beta-D-ribosyl)-5'-AMP + H2O = 1-(5-phospho-beta-D-ribosyl)-5-[(5-phospho-beta-D-ribosylamino)methylideneamino]imidazole-4-carboxamide. It functions in the pathway amino-acid biosynthesis; L-histidine biosynthesis; L-histidine from 5-phospho-alpha-D-ribose 1-diphosphate: step 3/9. In terms of biological role, catalyzes the hydrolysis of the adenine ring of phosphoribosyl-AMP. In Pseudomonas putida (strain GB-1), this protein is Phosphoribosyl-AMP cyclohydrolase.